A 581-amino-acid chain; its full sequence is MAMSSLRRLVSLLRSQNDLIDIFAPVDPYLELPEIHRRVIENQGPALLFHNVQGASFPVLTNLFGTQKRVDQIFSKVPKGLIPQVIHLLSSPPKLSQLWKHRNLLLRGLSLGLRKARFLKFPHKKMASVDLHQLPMLTSWPEDGGAFLTLPLVYTESPSSKIPNLGMYRMQRFDRDTLGLHFQIQKGGGMHFYEAEQKNENLPVTVFLSGNPFLILSAIAPLPENISELLLCTFLQGSKLHYKNDPDTPHPLLYDSEFILIGEGICNERRPEGPFGDHFGYYSLQHDFPAFKCRKIYHRKDAIYPATIVGKPYQEDFYLGNKLQEYLSPLFPMVMPGVRQLKSYGEAGFHALTGAVVKERYWKESLATSLRILGEGQLSLTKFLMITDHHVDLDNFPKLLETILSRIVPERDLIIFSETSNDTLDYTGPKLNKGSKAIFMGIGPAIRDLPHKYRGKSLPNITNMGTFCPGCLVLETTLQQVNIDALLNHPDLSSWPLVVLTENLNETLASSKDFLWKTFTRLAPATDLHVRFSNVAHHRPNYTFPILLNSLMKPHYPKEVEADETTIQKVSHRWNEYFPKY.

It belongs to the UbiD family.

This is an uncharacterized protein from Chlamydia caviae (strain ATCC VR-813 / DSM 19441 / 03DC25 / GPIC) (Chlamydophila caviae).